The following is a 548-amino-acid chain: Tau-cadinol synthase (548 aa).

2 residues coordinate Mg(2+): aspartate 303 and aspartate 307. Substrate-binding residues include aspartate 303, aspartate 307, and arginine 443. The DDXXD motif motif lies at 303 to 307 (DDTYD).

The protein belongs to the terpene synthase family. Monomer. Mg(2+) serves as cofactor. Mn(2+) is required as a cofactor. As to expression, constitutively expressed in aerial tissues, but barely observed in roots.

The protein resides in the cytoplasm. The catalysed reaction is (2E,6E)-farnesyl diphosphate + H2O = tau-cadinol + diphosphate. It participates in secondary metabolite biosynthesis; terpenoid biosynthesis. Sesquiterpene synthase that catalyzes the formation of a blend of sesquiterpenes and sesquiterpenoid alcohols. Converts farnesyl diphosphate to tau-cadinol. This chain is Tau-cadinol synthase, found in Zea mays (Maize).